The primary structure comprises 316 residues: ATP synthase gamma chain (316 aa).

This sequence belongs to the ATPase gamma chain family. As to quaternary structure, F-type ATPases have 2 components, CF(1) - the catalytic core - and CF(0) - the membrane proton channel. CF(1) has five subunits: alpha(3), beta(3), gamma(1), delta(1), epsilon(1). CF(0) has three main subunits: a, b and c.

Its subcellular location is the cellular thylakoid membrane. Produces ATP from ADP in the presence of a proton gradient across the membrane. The gamma chain is believed to be important in regulating ATPase activity and the flow of protons through the CF(0) complex. In Synechococcus sp. (strain CC9605), this protein is ATP synthase gamma chain.